Consider the following 230-residue polypeptide: Secretory carrier-associated membrane protein 4 (230 aa).

Residues 1-39 lie on the Cytoplasmic side of the membrane; sequence MAGKENNFPPLPHFLPLKPCFYQDFSDEIPVEHQVLVKR. 4 consecutive transmembrane segments (helical) span residues 40–60, 61–81, 106–126, and 149–169; these read IYRL…ACLA, WWIA…LVLF, MAFF…AIGF, and VVML…AITI. Over 170-230 the chain is Cytoplasmic; the sequence is VKVHRIYRGA…SYSTSGSQWP (61 aa). The residue at position 194 (Thr-194) is a Phosphothreonine. Residues 197–230 are disordered; the sequence is NPPSREAQFNSFSGNSLPEYPTVPSYSTSGSQWP. 2 stretches are compositionally biased toward polar residues: residues 203-212 and 220-230; these read AQFNSFSGNS and PSYSTSGSQWP.

It belongs to the SCAMP family.

The protein resides in the membrane. In terms of biological role, probably involved in membrane protein trafficking. This is Secretory carrier-associated membrane protein 4 (Scamp4) from Rattus norvegicus (Rat).